The primary structure comprises 195 residues: A-type ATP synthase subunit E (195 aa).

The protein belongs to the V-ATPase E subunit family. In terms of assembly, has multiple subunits with at least A(3), B(3), C, D, E, F, H, I and proteolipid K(x).

Its subcellular location is the cell membrane. Functionally, component of the A-type ATP synthase that produces ATP from ADP in the presence of a proton gradient across the membrane. The polypeptide is A-type ATP synthase subunit E (Halobacterium salinarum (strain ATCC 29341 / DSM 671 / R1)).